A 448-amino-acid chain; its full sequence is UDP-glucose 6-dehydrogenase (448 aa).

Residues 2-19 (NITF…GIIM), Val-11, Asp-30, Lys-35, Thr-121, and Glu-152 contribute to the NAD(+) site. Substrate is bound by residues 148-152 (EFLRE), Lys-204, Asn-208, 249-253 (FLNAG), and Gly-257. Cys-260 (nucleophile) is an active-site residue. Lys-263 lines the NAD(+) pocket. Lys-321 contributes to the substrate binding site. Residue Arg-328 participates in NAD(+) binding.

It belongs to the UDP-glucose/GDP-mannose dehydrogenase family.

The enzyme catalyses UDP-alpha-D-glucose + 2 NAD(+) + H2O = UDP-alpha-D-glucuronate + 2 NADH + 3 H(+). It functions in the pathway nucleotide-sugar biosynthesis; UDP-alpha-D-glucuronate biosynthesis; UDP-alpha-D-glucuronate from UDP-alpha-D-glucose: step 1/1. The protein is UDP-glucose 6-dehydrogenase (udg) of Rickettsia felis (strain ATCC VR-1525 / URRWXCal2) (Rickettsia azadi).